Reading from the N-terminus, the 173-residue chain is Membrane-bound hydrogenase subunit beta (173 aa).

It belongs to the complex I 30 kDa subunit family. The membrane-bound hydrogenase complex is composed of MbhK and MbhL, and may also contain MbhJ. It depends on Ni(2+) as a cofactor.

It is found in the cell membrane. The enzyme catalyses H2 + 2 oxidized [2Fe-2S]-[ferredoxin] = 2 reduced [2Fe-2S]-[ferredoxin] + 2 H(+). Inhibited by 0.1 mM Cu(2+). Its function is as follows. Beta subunit of a hydrogen-evolving hydrogenase that utilizes protons both as a substrate for hydrogen production and proton translocation. Acts by coupling the redox reaction via ferredoxin and iron-sulfur (Fe-S) clusters to proton translocation across the membrane thereby conserving the redox energy in a proton gradient. The chain is Membrane-bound hydrogenase subunit beta from Pyrococcus furiosus (strain ATCC 43587 / DSM 3638 / JCM 8422 / Vc1).